The following is a 144-amino-acid chain: Transcription antitermination protein NusB (144 aa).

This sequence belongs to the NusB family.

Involved in transcription antitermination. Required for transcription of ribosomal RNA (rRNA) genes. Binds specifically to the boxA antiterminator sequence of the ribosomal RNA (rrn) operons. In Pelotomaculum thermopropionicum (strain DSM 13744 / JCM 10971 / SI), this protein is Transcription antitermination protein NusB.